Consider the following 583-residue polypeptide: Aspartate--tRNA ligase (583 aa).

Glutamate 174 lines the L-aspartate pocket. An aspartate region spans residues 198-201; it reads QITK. Arginine 220 is an L-aspartate binding site. Residues 220 to 222 and glutamine 229 each bind ATP; that span reads RDE. Position 443 (histidine 443) interacts with L-aspartate. ATP is bound at residue glutamate 477. Arginine 484 serves as a coordination point for L-aspartate. Residue 529-532 participates in ATP binding; the sequence is GLDR.

This sequence belongs to the class-II aminoacyl-tRNA synthetase family. Type 1 subfamily. As to quaternary structure, homodimer.

It localises to the cytoplasm. It catalyses the reaction tRNA(Asp) + L-aspartate + ATP = L-aspartyl-tRNA(Asp) + AMP + diphosphate. In terms of biological role, catalyzes the attachment of L-aspartate to tRNA(Asp) in a two-step reaction: L-aspartate is first activated by ATP to form Asp-AMP and then transferred to the acceptor end of tRNA(Asp). The sequence is that of Aspartate--tRNA ligase from Streptococcus suis (strain 98HAH33).